The following is a 394-amino-acid chain: Na(+)/H(+) antiporter NhaA (394 aa).

11 consecutive transmembrane segments (helical) span residues 14 to 34, 59 to 79, 95 to 115, 125 to 145, 154 to 174, 179 to 199, 213 to 233, 254 to 274, 292 to 312, 328 to 348, and 363 to 383; these read AGGL…NSAL, LLLW…GLEV, VFPA…YLLF, GWAI…ALLG, VFLL…IALF, VSLQ…YMNW, LVLW…GVIV, GLHP…NAGV, IATG…WLAV, IFAV…IASL, and LGIL…LRLV.

Belongs to the NhaA Na(+)/H(+) (TC 2.A.33) antiporter family.

The protein resides in the cell inner membrane. The enzyme catalyses Na(+)(in) + 2 H(+)(out) = Na(+)(out) + 2 H(+)(in). In terms of biological role, na(+)/H(+) antiporter that extrudes sodium in exchange for external protons. This chain is Na(+)/H(+) antiporter NhaA, found in Yersinia pestis bv. Antiqua (strain Antiqua).